A 128-amino-acid chain; its full sequence is Lysozyme C-1 (128 aa).

In terms of domain architecture, C-type lysozyme spans 1–128; it reads KVYDRCEFAR…VSQYIRGCKL (128 aa). Intrachain disulfides connect cysteine 6-cysteine 126, cysteine 30-cysteine 114, cysteine 63-cysteine 79, and cysteine 75-cysteine 93. Catalysis depends on residues glutamate 35 and aspartate 51.

It belongs to the glycosyl hydrolase 22 family. Monomer.

The protein resides in the secreted. It carries out the reaction Hydrolysis of (1-&gt;4)-beta-linkages between N-acetylmuramic acid and N-acetyl-D-glucosamine residues in a peptidoglycan and between N-acetyl-D-glucosamine residues in chitodextrins.. Its function is as follows. Lysozymes have primarily a bacteriolytic function; those in tissues and body fluids are associated with the monocyte-macrophage system and enhance the activity of immunoagents. This chain is Lysozyme C-1, found in Sus scrofa (Pig).